The primary structure comprises 97 residues: Aspartyl/glutamyl-tRNA(Asn/Gln) amidotransferase subunit C (97 aa).

The protein belongs to the GatC family. Heterotrimer of A, B and C subunits.

The catalysed reaction is L-glutamyl-tRNA(Gln) + L-glutamine + ATP + H2O = L-glutaminyl-tRNA(Gln) + L-glutamate + ADP + phosphate + H(+). The enzyme catalyses L-aspartyl-tRNA(Asn) + L-glutamine + ATP + H2O = L-asparaginyl-tRNA(Asn) + L-glutamate + ADP + phosphate + 2 H(+). Functionally, allows the formation of correctly charged Asn-tRNA(Asn) or Gln-tRNA(Gln) through the transamidation of misacylated Asp-tRNA(Asn) or Glu-tRNA(Gln) in organisms which lack either or both of asparaginyl-tRNA or glutaminyl-tRNA synthetases. The reaction takes place in the presence of glutamine and ATP through an activated phospho-Asp-tRNA(Asn) or phospho-Glu-tRNA(Gln). This Picosynechococcus sp. (strain ATCC 27264 / PCC 7002 / PR-6) (Agmenellum quadruplicatum) protein is Aspartyl/glutamyl-tRNA(Asn/Gln) amidotransferase subunit C.